We begin with the raw amino-acid sequence, 26 residues long: uncharacterized protein (26 aa).

The span at 1-16 (MPEQKANCSPNGNITV) shows a compositional bias: polar residues. Residues 1–26 (MPEQKANCSPNGNITVDSMIMSLGSS) form a disordered region.

This is an uncharacterized protein from Saccharomyces cerevisiae (strain ATCC 204508 / S288c) (Baker's yeast).